Consider the following 355-residue polypeptide: Epoxide hydrolase 2 (355 aa).

The region spanning 78–323 is the AB hydrolase-1 domain; that stretch reads VLLMVHGFPE…IRGASHWVQQ (246 aa). Catalysis depends on Asp152, which acts as the Nucleophile. Catalysis depends on Tyr263, which acts as the Proton donor. Residue His319 is the Proton acceptor of the active site.

This sequence belongs to the AB hydrolase superfamily. Epoxide hydrolase family.

It carries out the reaction an epoxide + H2O = an ethanediol. It functions in the pathway lipid metabolism. In terms of biological role, catalyzes the hydrolysis of epoxide-containing fatty acids. Active in vitro against trans-1,3-diphenylpropene oxide (t-DPPO), epoxyeicosatrienoic acids (EETs) including 8,9-EET, 11,12-EET and 14,15-EET and the linoleic acid metabolites 12,13-epoxy-9-octadecenoate (12,13-EpOME) and 9,10-epoxy-12-octadecenoate (9,10-EpOME). This chain is Epoxide hydrolase 2, found in Caenorhabditis elegans.